Consider the following 265-residue polypeptide: S-acyl fatty acid synthase thioesterase, medium chain (265 aa).

M1 is modified (N-acetylmethionine). Residues S101 and H237 contribute to the active site.

This sequence belongs to the thioesterase family. As to quaternary structure, interacts (via C-terminus) with FASN. In terms of tissue distribution, detected both in lactating and non-lactating breast epithelium (at protein level). Isoform 2 is up-regulated in bone marrow-derived mononuclear cells of rheumatoid arthritis patients.

The protein localises to the cytoplasm. Its subcellular location is the cytosol. The enzyme catalyses (9Z)-octadecenoyl-[ACP] + H2O = (9Z)-octadecenoate + holo-[ACP] + H(+). It carries out the reaction decanoyl-CoA + H2O = decanoate + CoA + H(+). It catalyses the reaction dodecanoyl-CoA + H2O = dodecanoate + CoA + H(+). The catalysed reaction is tetradecanoyl-CoA + H2O = tetradecanoate + CoA + H(+). The enzyme catalyses hexadecanoyl-CoA + H2O = hexadecanoate + CoA + H(+). Its function is as follows. Contributes to the release of free fatty acids from fatty acid synthase (FASN). Has broad substrate specificity, giving rise to a range of free fatty acids with chain lengths between 10 and 16 carbon atoms (C10 - C16). This Homo sapiens (Human) protein is S-acyl fatty acid synthase thioesterase, medium chain.